A 61-amino-acid chain; its full sequence is Large ribosomal subunit protein uL29 (61 aa).

This sequence belongs to the universal ribosomal protein uL29 family.

The polypeptide is Large ribosomal subunit protein uL29 (Stenotrophomonas maltophilia (strain K279a)).